The following is a 309-amino-acid chain: Homoserine O-succinyltransferase (309 aa).

The active-site Acyl-thioester intermediate is cysteine 142. Positions 163 and 192 each coordinate substrate. The active-site Proton acceptor is histidine 235. Glutamate 237 is an active-site residue. Arginine 249 contacts substrate.

This sequence belongs to the MetA family. In terms of assembly, homodimer.

Its subcellular location is the cytoplasm. It catalyses the reaction L-homoserine + succinyl-CoA = O-succinyl-L-homoserine + CoA. It participates in amino-acid biosynthesis; L-methionine biosynthesis via de novo pathway; O-succinyl-L-homoserine from L-homoserine: step 1/1. In terms of biological role, transfers a succinyl group from succinyl-CoA to L-homoserine, forming succinyl-L-homoserine. This Escherichia coli (strain K12 / MC4100 / BW2952) protein is Homoserine O-succinyltransferase.